A 247-amino-acid chain; its full sequence is GTP cyclohydrolase 1 type 2 homolog (247 aa).

Positions 63, 64, 101, 215, and 219 each coordinate a divalent metal cation.

Belongs to the GTP cyclohydrolase I type 2/NIF3 family. Toroid-shaped homohexamer. In the hexamer, 3 dimers assemble to form a ring-like structure surrounding a central hole.

Provides significant protection from radiation damage and may be involved in the degradation of radiation-damaged nucleotides. This chain is GTP cyclohydrolase 1 type 2 homolog (ybgI), found in Escherichia coli O157:H7.